The chain runs to 270 residues: Ribosomal RNA small subunit methyltransferase J (270 aa).

Residues 126-127 (ER) and Asp182 each bind S-adenosyl-L-methionine.

The protein belongs to the methyltransferase superfamily. RsmJ family.

Its subcellular location is the cytoplasm. The catalysed reaction is guanosine(1516) in 16S rRNA + S-adenosyl-L-methionine = N(2)-methylguanosine(1516) in 16S rRNA + S-adenosyl-L-homocysteine + H(+). In terms of biological role, specifically methylates the guanosine in position 1516 of 16S rRNA. This is Ribosomal RNA small subunit methyltransferase J from Acinetobacter baylyi (strain ATCC 33305 / BD413 / ADP1).